A 319-amino-acid polypeptide reads, in one-letter code: L-lactate dehydrogenase (319 aa).

NAD(+)-binding positions include Val-17, Asp-38, Lys-43, Tyr-69, and 83–84 (GA). Substrate-binding positions include Gln-86, Arg-92, and 124–127 (NPVD). Residues 122 to 124 (ATN) and Ser-147 each bind NAD(+). Residue 152-155 (DTAR) participates in substrate binding. Beta-D-fructose 1,6-bisphosphate-binding residues include Arg-157 and His-172. The active-site Proton acceptor is the His-179. Tyr-224 carries the phosphotyrosine modification. Thr-233 is a substrate binding site.

The protein belongs to the LDH/MDH superfamily. LDH family. Homotetramer.

The protein localises to the cytoplasm. The catalysed reaction is (S)-lactate + NAD(+) = pyruvate + NADH + H(+). The protein operates within fermentation; pyruvate fermentation to lactate; (S)-lactate from pyruvate: step 1/1. Allosterically activated by fructose 1,6-bisphosphate (FBP). Its function is as follows. Catalyzes the conversion of lactate to pyruvate. In Bacillus licheniformis (strain ATCC 14580 / DSM 13 / JCM 2505 / CCUG 7422 / NBRC 12200 / NCIMB 9375 / NCTC 10341 / NRRL NRS-1264 / Gibson 46), this protein is L-lactate dehydrogenase.